The chain runs to 600 residues: UPF0588 membrane protein C20F10.02c (600 aa).

Transmembrane regions (helical) follow at residues Leu-409–Val-429 and Tyr-437–Ile-457.

It belongs to the UPF0588 family.

It is found in the membrane. The polypeptide is UPF0588 membrane protein C20F10.02c (Schizosaccharomyces pombe (strain 972 / ATCC 24843) (Fission yeast)).